The primary structure comprises 302 residues: uncharacterized protein (302 aa).

Residues 1–52 (MLKKLKVVRLLVNHLIYCPSIFMPYSKNMKKKIWNKTSLGALFMLFGTALTA) form the signal peptide.

It belongs to the MG439/MG440 family.

This is an uncharacterized protein from Mycoplasma pneumoniae (strain ATCC 29342 / M129 / Subtype 1) (Mycoplasmoides pneumoniae).